A 758-amino-acid polypeptide reads, in one-letter code: Spastin (758 aa).

The disordered stretch occupies residues 1–99 (MVRTKNQSSS…PTTCSPRSGH (99 aa)). Topologically, residues 1–121 (MVRTKNQSSS…KQNLYVVSFP (121 aa)) are cytoplasmic. The tract at residues 1–210 (MVRTKNQSSS…RPIQPLEMAA (210 aa)) is required for localization to punctate cytoplasmic foci. 4 stretches are compositionally biased toward low complexity: residues 8 to 28 (SSSS…SSGA), 43 to 58 (RSSS…AGGS), 66 to 76 (SSNRRSPGSSP), and 85 to 95 (TDDLTPTTCSP). Residues 122–142 (IIFLFNVLRSLIYQLFCIFRY) constitute an intramembrane region (helical). The Cytoplasmic portion of the chain corresponds to 143–758 (LYGASTKVIY…WSQDYGDITI (616 aa)). Composition is skewed to polar residues over residues 169 to 180 (SKEQQQSLNHPS) and 189 to 198 (QEQQLSNQPQ). The disordered stretch occupies residues 169–203 (SKEQQQSLNHPSELSREGDGQEQQLSNQPQRFRPI). The segment at 208-758 (MAANRPGGGY…WSQDYGDITI (551 aa)) is sufficient for interaction with microtubules and microtubule severing. Residues 233-308 (HRRAFEYISK…SMARDRLHFL (76 aa)) enclose the MIT domain. 2 disordered regions span residues 353 to 375 (RVRS…SGRK) and 390 to 454 (NKSQ…ASTP). 2 stretches are compositionally biased toward polar residues: residues 390–406 (NKSQ…TSVG) and 425–454 (QFSS…ASTP). Residues 443-455 (NNGPSGSGASTPV) are required for interaction with microtubules. An ATP-binding site is contributed by 523–530 (GPPGNGKT).

It belongs to the AAA ATPase family. Spastin subfamily. As to quaternary structure, homohexamer. The homohexamer is stabilized by ATP-binding. The homohexamer may adopt a ring conformation through which microtubules pass prior to being severed. Interacts with microtubules. Interacts with atl; may be involved in microtubule dynamics.

It is found in the membrane. It localises to the cytoplasm. The protein localises to the cytoskeleton. Its subcellular location is the microtubule organizing center. The protein resides in the centrosome. It is found in the chromosome. It localises to the lipid droplet. It catalyses the reaction n ATP + n H2O + a microtubule = n ADP + n phosphate + (n+1) alpha/beta tubulin heterodimers.. In terms of biological role, ATP-dependent microtubule severing protein. Stimulates microtubule minus-end depolymerization and poleward microtubule flux in the mitotic spindle. Regulates microtubule stability in the neuromuscular junction synapse. Involved in lipid metabolism by regulating the size and distribution of lipid droplets. Involved in axon regeneration by regulating microtubule severing. This chain is Spastin, found in Drosophila erecta (Fruit fly).